Reading from the N-terminus, the 221-residue chain is MSKKVVVIYSGGMDSFTVLHKAMQQGLTPYALTFDYGQRHIKEIEVAREVCEELGVHHKVIDISAINQLIGGSSLTDSSIDVAQGHYQQESMKSTVVPNRNMILLSLAIGYAVSLGAEQVYYGAHSGDHEIYPDCRPIFVEKMNDVAAVANYEKVEIFSPYLNNNKSGILKDGLAMGLDYSKTWTCYNGREKACGKCGSCVERLEAFAANGLKDPIAYEDT.

Residue 9 to 19 (YSGGMDSFTVL) participates in ATP binding. Zn(2+) is bound by residues C186, C194, C197, and C200.

The protein belongs to the QueC family. Requires Zn(2+) as cofactor.

It carries out the reaction 7-carboxy-7-deazaguanine + NH4(+) + ATP = 7-cyano-7-deazaguanine + ADP + phosphate + H2O + H(+). It functions in the pathway purine metabolism; 7-cyano-7-deazaguanine biosynthesis. In terms of biological role, catalyzes the ATP-dependent conversion of 7-carboxy-7-deazaguanine (CDG) to 7-cyano-7-deazaguanine (preQ(0)). The protein is 7-cyano-7-deazaguanine synthase of Psychromonas ingrahamii (strain DSM 17664 / CCUG 51855 / 37).